Here is a 119-residue protein sequence, read N- to C-terminus: Acidic phospholipase A2 E (119 aa).

7 disulfides stabilise this stretch: Cys-11–Cys-71, Cys-26–Cys-118, Cys-28–Cys-44, Cys-43–Cys-99, Cys-50–Cys-92, Cys-60–Cys-85, and Cys-78–Cys-90. Ca(2+) is bound by residues Tyr-27, Gly-29, and Gly-31. Residue His-47 is part of the active site. Asp-48 lines the Ca(2+) pocket. Asp-93 is an active-site residue.

The protein belongs to the phospholipase A2 family. Group I subfamily. D49 sub-subfamily. Ca(2+) is required as a cofactor. As to expression, expressed by the venom gland.

The protein localises to the secreted. It carries out the reaction a 1,2-diacyl-sn-glycero-3-phosphocholine + H2O = a 1-acyl-sn-glycero-3-phosphocholine + a fatty acid + H(+). Functionally, PLA2 catalyzes the calcium-dependent hydrolysis of the 2-acyl groups in 3-sn-phosphoglycerides. This is Acidic phospholipase A2 E from Naja oxiana (Central Asian cobra).